The chain runs to 546 residues: Chaperonin GroEL (546 aa).

ATP is bound by residues Thr30–Pro33, Lys51, Asp87–Thr91, Gly415, and Asp495.

Belongs to the chaperonin (HSP60) family. In terms of assembly, forms a cylinder of 14 subunits composed of two heptameric rings stacked back-to-back. Interacts with the co-chaperonin GroES.

It is found in the cytoplasm. The enzyme catalyses ATP + H2O + a folded polypeptide = ADP + phosphate + an unfolded polypeptide.. Functionally, together with its co-chaperonin GroES, plays an essential role in assisting protein folding. The GroEL-GroES system forms a nano-cage that allows encapsulation of the non-native substrate proteins and provides a physical environment optimized to promote and accelerate protein folding. This chain is Chaperonin GroEL, found in Alteromonas mediterranea (strain DSM 17117 / CIP 110805 / LMG 28347 / Deep ecotype).